A 229-amino-acid polypeptide reads, in one-letter code: Clathrin light chain B (229 aa).

Residues 1-17 show a composition bias toward low complexity; the sequence is MADDFGFFSSSESGAPE. The segment at 1–82 is disordered; sequence MADDFGFFSS…NGDVFQEANG (82 aa). 2 positions are modified to phosphoserine: serine 11 and serine 13. The span at 58 to 73 shows a compositional bias: polar residues; it reads GPTSGAGSEDMGTTVN. Positions 93-155 are involved in binding clathrin heavy chain; that stretch reads ADRLTQEPES…QVEKNKINNR (63 aa). A Phosphothreonine modification is found at threonine 187. Cysteines 199 and 209 form a disulfide. N6-acetyllysine is present on lysine 204. The residue at position 217 (serine 217) is a Phosphoserine.

Belongs to the clathrin light chain family. In terms of assembly, clathrin coats are formed from molecules containing 3 heavy chains and 3 light chains. Interacts (via N-terminus) with HIP1. Interacts with HIP1R.

It is found in the cytoplasmic vesicle membrane. The protein resides in the membrane. The protein localises to the coated pit. Functionally, clathrin is the major protein of the polyhedral coat of coated pits and vesicles. This is Clathrin light chain B (CLTB) from Homo sapiens (Human).